The primary structure comprises 193 residues: MSLLSVVFVALALSADCFAVSIGIACTHTDVKPRIMWRVAGTFGLFQAGMAVIGYYAGLSIADVISSFDHWVAFGLLTVIGGRMVYESVQGEDDQKLVRLDLTRGLGLLGVAIATSIDALAVGLTFSLSETNIGLAALLVGAVSLAVSYLGFKLGNRISHLASRWVGIAGGLILCLIGLKILAEHTLGWDILL.

Helical transmembrane passes span 6-26 (VVFVALALSADCFAVSIGIAC), 39-59 (VAGTFGLFQAGMAVIGYYAGL), 61-81 (IADVISSFDHWVAFGLLTVIG), 106-126 (LGLLGVAIATSIDALAVGLTF), 132-152 (NIGLAALLVGAVSLAVSYLGF), and 165-185 (WVGIAGGLILCLIGLKILAEH).

It belongs to the MntP (TC 9.B.29) family.

It localises to the cell membrane. Functionally, probably functions as a manganese efflux pump. This Dehalococcoides mccartyi (strain ATCC BAA-2266 / KCTC 15142 / 195) (Dehalococcoides ethenogenes (strain 195)) protein is Putative manganese efflux pump MntP.